The following is a 467-amino-acid chain: Adenosylhomocysteinase (467 aa).

Positions 68, 144, and 169 each coordinate substrate. 170 to 172 is a binding site for NAD(+); it reads TTT. The substrate site is built by Lys-199 and Asp-203. Residues Asn-204, 233 to 238, Glu-256, Asn-305, 326 to 328, and Asn-373 each bind NAD(+); these read GYGDVG and IGH.

Belongs to the adenosylhomocysteinase family. NAD(+) is required as a cofactor.

The protein resides in the cytoplasm. It catalyses the reaction S-adenosyl-L-homocysteine + H2O = L-homocysteine + adenosine. It functions in the pathway amino-acid biosynthesis; L-homocysteine biosynthesis; L-homocysteine from S-adenosyl-L-homocysteine: step 1/1. May play a key role in the regulation of the intracellular concentration of adenosylhomocysteine. The chain is Adenosylhomocysteinase from Acinetobacter baylyi (strain ATCC 33305 / BD413 / ADP1).